Here is a 228-residue protein sequence, read N- to C-terminus: Aquaporin Z (228 aa).

5 consecutive transmembrane segments (helical) span residues 1-21 (MLNKLSAEFFGTFWLVFGGCG), 46-66 (TVLTMAYAVGGISGGHFNPAV), 82-102 (IPYWVAQVLGAIATAAILYVI), 129-149 (MMAGLLIEIILTAFFIIIILG), and 154-174 (LAPAGFAPIAIGFGLTLIHLV). The NPA 1 motif lies at 63–65 (NPA). Residues 184 to 186 (NPA) carry the NPA 2 motif. Residues 205 to 225 (LFWVAPLVGAVIGAIIWKGLL) traverse the membrane as a helical segment.

This sequence belongs to the MIP/aquaporin (TC 1.A.8) family. Homotetramer.

The protein resides in the cell inner membrane. The enzyme catalyses H2O(in) = H2O(out). Channel that permits osmotically driven movement of water in both directions. It is involved in the osmoregulation and in the maintenance of cell turgor during volume expansion in rapidly growing cells. It mediates rapid entry or exit of water in response to abrupt changes in osmolarity. The chain is Aquaporin Z from Brucella suis biovar 1 (strain 1330).